The chain runs to 879 residues: Band 4.1-like protein 1 (879 aa).

The interval 1–88 (MTTETGPDSE…TPSKAQKSPQ (88 aa)) is disordered. Residues 17–35 (ETPQQPEAAAAVTTPVTPA) are compositionally biased toward low complexity. Residue Thr30 is modified to Phosphothreonine. A compositionally biased stretch (basic and acidic residues) spans 38 to 50 (SHPETNSNEKHLT). Position 75 is a phosphoserine (Ser75). The span at 76 to 87 (ERTTPSKAQKSP) shows a compositional bias: polar residues. Position 79 is a phosphothreonine (Thr79). In terms of domain architecture, FERM spans 97-378 (AICRVTLLDA…EHHTFFRLVS (282 aa)). Residue Tyr343 is modified to Phosphotyrosine. A phosphoserine mark is found at Ser378, Ser430, Ser437, Ser461, and Ser466. Residues 381–482 (PPPKGFLVMG…VRTPTKIKEL (102 aa)) form a hydrophilic region. A disordered region spans residues 428–501 (SRSLDGAEFS…HKQEFLDKPE (74 aa)). Over residues 444–501 (ENHDAGPEGDKREDDAESGGRRSEAEEGEVRTPTKIKELKPEQETTPRHKQEFLDKPE) the composition is skewed to basic and acidic residues. Position 475 is a phosphothreonine (Thr475). The tract at residues 483–541 (KPEQETTPRHKQEFLDKPEDVLLKHQASINELKRTLKEPNSKLIHRDRDWDRERRLPSS) is spectrin--actin-binding. Position 510 is a phosphoserine (Ser510). A compositionally biased stretch (basic and acidic residues) spans 514-538 (LKRTLKEPNSKLIHRDRDWDRERRL). The segment at 514 to 594 (LKRTLKEPNS…QDQERDAVFL (81 aa)) is disordered. 4 positions are modified to phosphoserine: Ser540, Ser541, Ser544, and Ser546. Thr550 carries the phosphothreonine modification. Residues 550–577 (TPEKASERAGLREGSEEKVKPPRPRAPE) show a composition bias toward basic and acidic residues. Residues Ser564, Ser578, Ser639, Ser648, Ser650, Ser665, Ser666, Ser671, Ser677, and Ser684 each carry the phosphoserine modification. The segment at 657–696 (FAQDLKGPSSQEDESGGLEDSPDRGACSTPEMPQFESVKA) is disordered. The residue at position 685 (Thr685) is a Phosphothreonine. Ser721, Ser782, and Ser868 each carry phosphoserine. The interval 743–879 (PCITTETIST…EERDKKPQES (137 aa)) is C-terminal (CTD).

In terms of assembly, interacts with AGAP2. Highest expression in brain, also present in kidney, olfactory epithelium, retina, sensory ganglia, gastrointestinal tract (only enteric neurons) and lung.

It is found in the cytoplasm. Its subcellular location is the cytoskeleton. In terms of biological role, may function to confer stability and plasticity to neuronal membrane via multiple interactions, including the spectrin-actin-based cytoskeleton, integral membrane channels and membrane-associated guanylate kinases. In Mus musculus (Mouse), this protein is Band 4.1-like protein 1.